The sequence spans 103 residues: Floral defensin-like protein 1 (103 aa).

The first 25 residues, 1-25 (MARSICFFAVAILALMLFAAYDAEA), serve as a signal peptide directing secretion. Cystine bridges form between cysteine 28/cysteine 72, cysteine 32/cysteine 48, cysteine 39/cysteine 59, cysteine 45/cysteine 66, and cysteine 49/cysteine 68. A propeptide spans 73-103 (VFEKTEATQTETFTKDVNTLAEALLEADMMV) (removed in mature form).

Belongs to the DEFL family. Post-translationally, when compared to other plant defensins, the petunia defensins have an additional fifth disulfide bond. As to expression, petals.

Its subcellular location is the secreted. The protein localises to the vacuole. Its function is as follows. Plant defense peptide with antifungal activity against F.oxysporum and B.cinerea. This is Floral defensin-like protein 1 (D1) from Petunia hybrida (Petunia).